Consider the following 418-residue polypeptide: Tyrosine--tRNA ligase (418 aa).

Tyrosine 34 is an L-tyrosine binding site. Positions 39-48 (PTADSLHLGH) match the 'HIGH' region motif. L-tyrosine contacts are provided by tyrosine 169 and glutamine 173. Positions 229–233 (KFGKS) match the 'KMSKS' region motif. Lysine 232 is a binding site for ATP. The S4 RNA-binding domain maps to 352–418 (LNIVDMLVTA…GKKKYAVLTY (67 aa)).

Belongs to the class-I aminoacyl-tRNA synthetase family. TyrS type 1 subfamily. As to quaternary structure, homodimer.

It is found in the cytoplasm. It catalyses the reaction tRNA(Tyr) + L-tyrosine + ATP = L-tyrosyl-tRNA(Tyr) + AMP + diphosphate + H(+). Catalyzes the attachment of tyrosine to tRNA(Tyr) in a two-step reaction: tyrosine is first activated by ATP to form Tyr-AMP and then transferred to the acceptor end of tRNA(Tyr). In Streptococcus equi subsp. zooepidemicus (strain MGCS10565), this protein is Tyrosine--tRNA ligase.